The chain runs to 109 residues: Aquaporin-2 (109 aa).

Residues serine 1–arginine 6 are Cytoplasmic-facing. The chain crosses the membrane as a helical span at residues alanine 7–leucine 27. At asparagine 28 to serine 35 the chain is on the extracellular side. The helical transmembrane segment at valine 36 to leucine 54 threads the bilayer. Residues glycine 55–glycine 59 are Cytoplasmic-facing. Positions alanine 60–alanine 69 form an intramembrane region, discontinuously helical. The NPA 1 motif lies at asparagine 63–alanine 65. Over cysteine 70–arginine 80 the chain is Cytoplasmic. The helical transmembrane segment at alanine 81–valine 102 threads the bilayer. Residues threonine 103–glycine 109 are Extracellular-facing.

Belongs to the MIP/aquaporin (TC 1.A.8) family. In terms of assembly, homotetramer. Serine phosphorylation is necessary and sufficient for expression at the apical membrane. Endocytosis is not phosphorylation-dependent. In terms of processing, N-glycosylated.

It is found in the apical cell membrane. It localises to the basolateral cell membrane. Its subcellular location is the cell membrane. The protein resides in the cytoplasmic vesicle membrane. The protein localises to the golgi apparatus. It is found in the trans-Golgi network membrane. It carries out the reaction H2O(in) = H2O(out). The catalysed reaction is glycerol(in) = glycerol(out). Its function is as follows. Forms a water-specific channel that provides the plasma membranes of renal collecting duct with high permeability to water, thereby permitting water to move in the direction of an osmotic gradient. Plays an essential role in renal water homeostasis. Could also be permeable to glycerol. In Erinaceus europaeus (Western European hedgehog), this protein is Aquaporin-2.